We begin with the raw amino-acid sequence, 293 residues long: Acetylglutamate kinase (293 aa).

Residues 60–61 (GG), Arg-82, and Asn-188 each bind substrate.

Belongs to the acetylglutamate kinase family. ArgB subfamily.

Its subcellular location is the cytoplasm. The enzyme catalyses N-acetyl-L-glutamate + ATP = N-acetyl-L-glutamyl 5-phosphate + ADP. It participates in amino-acid biosynthesis; L-arginine biosynthesis; N(2)-acetyl-L-ornithine from L-glutamate: step 2/4. Catalyzes the ATP-dependent phosphorylation of N-acetyl-L-glutamate. In Methanothermobacter thermautotrophicus (strain ATCC 29096 / DSM 1053 / JCM 10044 / NBRC 100330 / Delta H) (Methanobacterium thermoautotrophicum), this protein is Acetylglutamate kinase.